The following is a 212-amino-acid chain: MVIKLYGSAMSTARVLVTLLEKELPYEHILVDISKGDQNKEEYLKLQPFGKVPVLDDNGFIMYESRAICRYLARKYDSGTKLIPDVDDHEAYGRFEQGCSIEYSYFAAAAETLGTELVIKKYKGLGEPDMTRVAQAEADFDKVFFEYDKILAKQKYLTGDEISLVDLFHLPNASALKAFGYQGTFEKYPNVNRWFSGLQARETWIKATAEAR.

Residues Met1–Thr80 form the GST N-terminal domain. Glutathione is bound by residues Lys51 to Val52 and Glu64 to Ser65. The GST C-terminal domain maps to Asp88–Arg212.

The protein belongs to the GST superfamily.

The catalysed reaction is RX + glutathione = an S-substituted glutathione + a halide anion + H(+). It functions in the pathway secondary metabolite biosynthesis. Functionally, glutathione S-transferase; part of the gene cluster that mediates the biosynthesis of hypothemycin, a resorcylic acid lactone (RAL) that irreversibly inhibits a subset of protein kinases with a conserved cysteine in the ATP binding site such as human ERK2. The first step is performed by both PKSs hmp3 and hmp8 and leads to the production of 7',8'-dehydrozearalenol (DHZ). The highly reducing PKS hpm8 synthesizes the reduced hexaketide (7S,11S,2E,8E)-7,11-dihydroxy-dodeca-2,8-dienoate, which is transferred downstream to the non-reducing PKS hpm3. Hpm3 then extends the reduced hexaketide to a nonaketide, after which regioselective cyclization and macrolactonization affords DHZ. The next step is the conversion of DHZ into aigialomycin C and is performed by the O-methyltransferase hmp5, the FAD-binding monooxygenase hmp7, and the cytochrome P450 monooxygenase hmp1. The wide substrate tolerance of the hmp5 and hmp7 implies that the reactions from DHZ to aigialomycin C can occur in any order. The steps from aigialomycin C to hypothemycin are less well established. The FAD-linked oxidoreductase hmp9 presumably catalyzes oxidation of the C-6' hydroxyl to a ketone. The timing of this oxidation is important, since the resulting enone functional group is a Michael acceptor that can react spontaneously with glutathione, an abundant metabolite in fungal cells. The glutathione S-transferase hmp2 catalyzes cis-trans isomerization of the 7',8' double bond with equilibrium favoring the trans isomer. The hpm6-encoded transporter might preferentially pump hypothemycin out of the cell relative to the trans isomer aigialomycin A. The cis-to-trans isomerization may be coupled with C-4' hydroxylation, since all known hypothemycin analogs containing the enone functional group also have hydroxyl groups at both C-4' and C-5'. The chain is Glutathione S-transferase hmp2 from Hypomyces subiculosus (Nectria subiculosa).